Reading from the N-terminus, the 495-residue chain is Putative aldehyde dehydrogenase AldA (495 aa).

An NAD(+)-binding site is contributed by 212 to 218 (GKGSESG). Catalysis depends on residues glutamate 256 and cysteine 290.

The protein belongs to the aldehyde dehydrogenase family.

The catalysed reaction is an aldehyde + NAD(+) + H2O = a carboxylate + NADH + 2 H(+). This Staphylococcus aureus (strain MRSA252) protein is Putative aldehyde dehydrogenase AldA (aldA).